The chain runs to 407 residues: Argininosuccinate synthase (407 aa).

Residues 12-20 (AFSGGLDTS) and Ala39 each bind ATP. Residues Tyr90 and Ser95 each contribute to the L-citrulline site. Gly120 serves as a coordination point for ATP. 3 residues coordinate L-aspartate: Thr122, Asn126, and Asp127. Asn126 provides a ligand contact to L-citrulline. 5 residues coordinate L-citrulline: Arg130, Ser181, Ser190, Glu266, and Tyr278.

This sequence belongs to the argininosuccinate synthase family. Type 1 subfamily. Homotetramer.

The protein resides in the cytoplasm. It carries out the reaction L-citrulline + L-aspartate + ATP = 2-(N(omega)-L-arginino)succinate + AMP + diphosphate + H(+). Its pathway is amino-acid biosynthesis; L-arginine biosynthesis; L-arginine from L-ornithine and carbamoyl phosphate: step 2/3. The chain is Argininosuccinate synthase from Nitrosospira multiformis (strain ATCC 25196 / NCIMB 11849 / C 71).